The primary structure comprises 462 residues: ATP synthase subunit beta 2 (462 aa).

An ATP-binding site is contributed by 151–158 (GGAGVGKT).

This sequence belongs to the ATPase alpha/beta chains family. F-type ATPases have 2 components, CF(1) - the catalytic core - and CF(0) - the membrane proton channel. CF(1) has five subunits: alpha(3), beta(3), gamma(1), delta(1), epsilon(1). CF(0) has three main subunits: a(1), b(2) and c(9-12). The alpha and beta chains form an alternating ring which encloses part of the gamma chain. CF(1) is attached to CF(0) by a central stalk formed by the gamma and epsilon chains, while a peripheral stalk is formed by the delta and b chains.

It localises to the cell inner membrane. The catalysed reaction is ATP + H2O + 4 H(+)(in) = ADP + phosphate + 5 H(+)(out). In terms of biological role, produces ATP from ADP in the presence of a proton gradient across the membrane. The catalytic sites are hosted primarily by the beta subunits. In Chlorobaculum tepidum (strain ATCC 49652 / DSM 12025 / NBRC 103806 / TLS) (Chlorobium tepidum), this protein is ATP synthase subunit beta 2.